The following is a 463-amino-acid chain: Asparagine--tRNA ligase (463 aa).

It belongs to the class-II aminoacyl-tRNA synthetase family. Homodimer.

Its subcellular location is the cytoplasm. It carries out the reaction tRNA(Asn) + L-asparagine + ATP = L-asparaginyl-tRNA(Asn) + AMP + diphosphate + H(+). The polypeptide is Asparagine--tRNA ligase (Bacillus thuringiensis subsp. konkukian (strain 97-27)).